Here is a 266-residue protein sequence, read N- to C-terminus: Tryptophan synthase alpha chain (266 aa).

Active-site proton acceptor residues include glutamate 49 and aspartate 60.

The protein belongs to the TrpA family. As to quaternary structure, tetramer of two alpha and two beta chains.

The enzyme catalyses (1S,2R)-1-C-(indol-3-yl)glycerol 3-phosphate + L-serine = D-glyceraldehyde 3-phosphate + L-tryptophan + H2O. The protein operates within amino-acid biosynthesis; L-tryptophan biosynthesis; L-tryptophan from chorismate: step 5/5. In terms of biological role, the alpha subunit is responsible for the aldol cleavage of indoleglycerol phosphate to indole and glyceraldehyde 3-phosphate. The protein is Tryptophan synthase alpha chain of Shewanella amazonensis (strain ATCC BAA-1098 / SB2B).